The primary structure comprises 490 residues: Polyamine transporter RMV1 (490 aa).

A compositionally biased stretch (polar residues) spans 1-21 (MTELSSPNLDSASQKPRISTE). The segment at 1 to 38 (MTELSSPNLDSASQKPRISTENPPPPPPHISIGVTTGD) is disordered. 12 consecutive transmembrane segments (helical) span residues 53 to 73 (ITVL…PFGI), 83 to 103 (LLAI…EALI), 116 to 136 (GYVV…QGWV), 160 to 180 (IPIL…TVAL), 188 to 208 (LSIV…PFVV), 231 to 248 (GVNW…LNYW), 273 to 293 (LLLV…AIAL), 303 to 323 (FADI…QAAA), 363 to 383 (TPWV…WLSF), 386 to 406 (IVAA…ITFV), 425 to 445 (VLGS…IMAF), and 448 to 468 (LKVA…QPCL).

Belongs to the amino acid-polyamine-organocation (APC) superfamily. Polyamine:cation symporter (PHS) (TC 2.A.3.12) family.

Its subcellular location is the cell membrane. In terms of biological role, cell membrane polyamine/proton symporter involved in the polyamine uptake in cells. Possesses high affinity for spermine and spermidine and lower affinity for putrescine. Transports paraquat, a polyamine analog, and thus confers sensitivity to this chemical which is used as a herbicide. The protein is Polyamine transporter RMV1 (RMV1) of Arabidopsis thaliana (Mouse-ear cress).